Here is a 347-residue protein sequence, read N- to C-terminus: MNPLAQPIIYSTIFAGTLITALSSHWFFAWVGLEMNMLAFIPVLTKKMNPRSTEAAIKYFLTQATASMILLMAILSNNMLSGQWTTTNATNQYSSLMIVVAMAMKLGMAPFHFWVPEVTQGTPLMSGLLLLTWQKLAPMSIMYQISSSTNVSLLLTLSILSILAGSWGGLNQTQLRKILAYSSITHVGWMMAVLPYNPNMTILNLTIYIILTTTTFLLLNLSSSTTTLLLSRTWNKLTWLTPLIPSTLLSLGGLPPLTGFLPKWLIIEEFTKNNDLITPTIMAIITLLNLYFYLRLIYSTSITLLPMSNNVKMKWQLEYTKPTPFLPTLITLTTLLLPISPFMLMVL.

The next 10 helical transmembrane spans lie at 13-33 (IFAG…WVGL), 55-75 (AAIK…MAIL), 96-116 (LMIV…FWVP), 123-143 (PLMS…SIMY), 150-170 (NVSL…WGGL), 178-198 (ILAY…PYNP), 201-221 (TILN…LLNL), 247-267 (TLLS…WLII), 277-297 (ITPT…LRLI), and 325-345 (FLPT…FMLM).

The protein belongs to the complex I subunit 2 family. In terms of assembly, core subunit of respiratory chain NADH dehydrogenase (Complex I) which is composed of 45 different subunits. Interacts with TMEM242.

The protein resides in the mitochondrion inner membrane. It carries out the reaction a ubiquinone + NADH + 5 H(+)(in) = a ubiquinol + NAD(+) + 4 H(+)(out). Its function is as follows. Core subunit of the mitochondrial membrane respiratory chain NADH dehydrogenase (Complex I) which catalyzes electron transfer from NADH through the respiratory chain, using ubiquinone as an electron acceptor. Essential for the catalytic activity and assembly of complex I. The sequence is that of NADH-ubiquinone oxidoreductase chain 2 from Gorilla gorilla gorilla (Western lowland gorilla).